We begin with the raw amino-acid sequence, 87 residues long: Large ribosomal subunit protein bL27 (87 aa).

This sequence belongs to the bacterial ribosomal protein bL27 family.

The chain is Large ribosomal subunit protein bL27 from Phocaeicola vulgatus (strain ATCC 8482 / DSM 1447 / JCM 5826 / CCUG 4940 / NBRC 14291 / NCTC 11154) (Bacteroides vulgatus).